We begin with the raw amino-acid sequence, 348 residues long: UPF0324 membrane protein BPP3732 (348 aa).

10 helical membrane passes run 20–39 (GILF…DLPF), 43–62 (FGFS…GNFL), 98–120 (IAAV…LLIG), 135–157 (AMLT…EPTL), 164–186 (SAVA…PVIY), 196–215 (QALG…VVGA), 235–257 (VALL…AAGA), 267–286 (VPWF…LDIL), 299–318 (VFVL…FAQI), and 322–344 (GPRV…YGIV).

This sequence belongs to the UPF0324 family.

The protein resides in the cell membrane. The polypeptide is UPF0324 membrane protein BPP3732 (Bordetella parapertussis (strain 12822 / ATCC BAA-587 / NCTC 13253)).